The chain runs to 492 residues: Glutamate--cysteine ligase A, chloroplastic (492 aa).

An intrachain disulfide couples cysteine 156 to cysteine 376.

It belongs to the carboxylate-amine ligase family. Glutamate--cysteine ligase type 2 subfamily. As to quaternary structure, homodimer or monomer when oxidized or reduced, respectively. In terms of processing, the Cys-156-Cys-376 disulfide bridge is known to modulate the enzyme activity according to the redox status. The oxidized form constitutes the active enzyme.

The protein localises to the plastid. It localises to the chloroplast. The catalysed reaction is L-cysteine + L-glutamate + ATP = gamma-L-glutamyl-L-cysteine + ADP + phosphate + H(+). The protein operates within sulfur metabolism; glutathione biosynthesis; glutathione from L-cysteine and L-glutamate: step 1/2. The protein is Glutamate--cysteine ligase A, chloroplastic (GSH1-1) of Oryza sativa subsp. indica (Rice).